The chain runs to 429 residues: C4-dicarboxylate transport protein (429 aa).

A run of 8 helical transmembrane segments spans residues 9 to 29, 45 to 65, 79 to 99, 149 to 169, 185 to 205, 223 to 243, 308 to 328, and 356 to 376; these read VLYV…HYYP, LIKM…IAGM, LLYF…ATHI, GEIL…AHLG, VLFG…FGAM, LIGT…GAIA, IYMT…LTWM, and AATL…ILGI.

The protein belongs to the dicarboxylate/amino acid:cation symporter (DAACS) (TC 2.A.23) family.

It localises to the cell inner membrane. In terms of biological role, responsible for the transport of dicarboxylates such as succinate, fumarate, and malate from the periplasm across the membrane. The chain is C4-dicarboxylate transport protein from Burkholderia multivorans (strain ATCC 17616 / 249).